Consider the following 628-residue polypeptide: tRNA(Thr) (cytosine(32)-N(3))-methyltransferase (628 aa).

Residues 1 to 18 (MGVADLIKKFESISKEEG) show a composition bias toward basic and acidic residues. Disordered stretches follow at residues 1–106 (MGVA…GENA), 124–269 (AEVL…VNDL), and 302–331 (NIAH…TEGS). Positions 22–31 (VDTNSSSKPL) are enriched in polar residues. Basic and acidic residues predominate over residues 32-42 (KSNDETKELHQ). Over residues 53–62 (DVNEEFENEP) the composition is skewed to acidic residues. Serine 93 is modified (phosphoserine). Over residues 132 to 146 (EESDAIQEGVAEETE) the composition is skewed to acidic residues. Threonine 150 bears the Phosphothreonine mark. Over residues 173–186 (PAEEYSQSEEDADI) the composition is skewed to acidic residues. A compositionally biased stretch (polar residues) spans 196-207 (NAENASQQANDG). A compositionally biased stretch (basic residues) spans 215–230 (KNKKKKNKKKNKKKRN). Residues 231-240 (GNVNTNANVD) show a composition bias toward polar residues. A phosphoserine mark is found at serine 321 and serine 326. At threonine 347 the chain carries Phosphothreonine. S-adenosyl-L-methionine contacts are provided by tryptophan 399, tyrosine 403, glycine 441, aspartate 466, aspartate 492, leucine 493, and isoleucine 515.

The protein belongs to the methyltransferase superfamily. METL family. In terms of assembly, interacts with SES1.

Its subcellular location is the cytoplasm. The protein resides in the cytoskeleton. It carries out the reaction cytidine(32) in tRNA(Thr) + S-adenosyl-L-methionine = N(3)-methylcytidine(32) in tRNA(Thr) + S-adenosyl-L-homocysteine + H(+). The enzyme catalyses cytidine(32) in tRNA(Ser) + S-adenosyl-L-methionine = N(3)-methylcytidine(32) in tRNA(Ser) + S-adenosyl-L-homocysteine + H(+). S-adenosyl-L-methionine-dependent methyltransferase that mediates N(3)-methylcytidine modification of residue 32 of the tRNA anticodon loop of tRNA(Thr) and tRNA(Ser). N(3)-methylcytidine methylation of tRNA(Thr) requires the N6-threonylcarbamoylation of tRNA (t6A37) by the EKC/KEOPS complex as prerequisite. N(3)-methylcytidine methylation of tRNA(Ser) requires the formation of N(6)-dimethylallyladenosine(37) (i6A37) by MOD5 as prerequisite. Methylation of tRNA(Ser) is also stimulated by SES1. Binds F-actin and shows weak F-actin cross-linking activity. This Saccharomyces cerevisiae (strain ATCC 204508 / S288c) (Baker's yeast) protein is tRNA(Thr) (cytosine(32)-N(3))-methyltransferase (ABP140).